A 156-amino-acid polypeptide reads, in one-letter code: Small ribosomal subunit protein uS7 (156 aa).

Belongs to the universal ribosomal protein uS7 family. Part of the 30S ribosomal subunit. Contacts proteins S9 and S11.

Its function is as follows. One of the primary rRNA binding proteins, it binds directly to 16S rRNA where it nucleates assembly of the head domain of the 30S subunit. Is located at the subunit interface close to the decoding center, probably blocks exit of the E-site tRNA. The polypeptide is Small ribosomal subunit protein uS7 (Lachnospira eligens (strain ATCC 27750 / DSM 3376 / VPI C15-48 / C15-B4) (Eubacterium eligens)).